We begin with the raw amino-acid sequence, 138 residues long: Large ribosomal subunit protein uL16 (138 aa).

Belongs to the universal ribosomal protein uL16 family. Part of the 50S ribosomal subunit.

Binds 23S rRNA and is also seen to make contacts with the A and possibly P site tRNAs. In Acholeplasma laidlawii (strain PG-8A), this protein is Large ribosomal subunit protein uL16.